The primary structure comprises 340 residues: N-acetyl-gamma-glutamyl-phosphate reductase (340 aa).

Residue Cys-148 is part of the active site.

Belongs to the NAGSA dehydrogenase family. Type 1 subfamily.

Its subcellular location is the cytoplasm. It carries out the reaction N-acetyl-L-glutamate 5-semialdehyde + phosphate + NADP(+) = N-acetyl-L-glutamyl 5-phosphate + NADPH + H(+). It functions in the pathway amino-acid biosynthesis; L-arginine biosynthesis; N(2)-acetyl-L-ornithine from L-glutamate: step 3/4. Its function is as follows. Catalyzes the NADPH-dependent reduction of N-acetyl-5-glutamyl phosphate to yield N-acetyl-L-glutamate 5-semialdehyde. This chain is N-acetyl-gamma-glutamyl-phosphate reductase, found in Methanosarcina mazei (strain ATCC BAA-159 / DSM 3647 / Goe1 / Go1 / JCM 11833 / OCM 88) (Methanosarcina frisia).